The sequence spans 396 residues: Succinyl-diaminopimelate desuccinylase (396 aa).

His74 is a binding site for Zn(2+). Residue Asp76 is part of the active site. Asp107 lines the Zn(2+) pocket. The active-site Proton acceptor is the Glu142. Positions 143, 171, and 360 each coordinate Zn(2+).

It belongs to the peptidase M20A family. DapE subfamily. As to quaternary structure, homodimer. Zn(2+) serves as cofactor. The cofactor is Co(2+).

The enzyme catalyses N-succinyl-(2S,6S)-2,6-diaminopimelate + H2O = (2S,6S)-2,6-diaminopimelate + succinate. It functions in the pathway amino-acid biosynthesis; L-lysine biosynthesis via DAP pathway; LL-2,6-diaminopimelate from (S)-tetrahydrodipicolinate (succinylase route): step 3/3. Its function is as follows. Catalyzes the hydrolysis of N-succinyl-L,L-diaminopimelic acid (SDAP), forming succinate and LL-2,6-diaminopimelate (DAP), an intermediate involved in the bacterial biosynthesis of lysine and meso-diaminopimelic acid, an essential component of bacterial cell walls. The polypeptide is Succinyl-diaminopimelate desuccinylase (Methylobacterium sp. (strain 4-46)).